An 861-amino-acid polypeptide reads, in one-letter code: ToMV resistance protein Tm-2(GCR236) (861 aa).

A coiled-coil region spans residues 63 to 83 (VKNLLKDIQELAGDVEDLLDD). One can recognise an NB-ARC domain in the interval 162–388 (DDFNMLQAKL…LESMGHKVQD (227 aa)). 185–192 (GMPGLGKT) contributes to the ATP binding site. LRR repeat units lie at residues 225–248 (LDIA…NLRS), 305–327 (LHAL…IFNF), 388–411 (DGCA…CFLY), 449–472 (LAED…TYNG), 510–536 (VARL…KLEK), 585–608 (MTCL…IVKL), 609–631 (TRLE…VWES), 652–680 (ISSF…FFEP), 689–710 (LRKL…IFSP), 712–735 (LKAL…LSSY), 736–758 (PHIA…SFPP), 784–810 (LRKL…GYSF), and 811–835 (PQLE…DVSM).

It belongs to the disease resistance NB-LRR family. As to quaternary structure, (Microbial infection) Interacts with tobamoviruses mouvement protein at the plasma membrane; this interaction triggers defense responses leading to programmed cell death. Binds to HSP90 proteins; this interaction seems required for defense responses toward tobamoviruses.

It localises to the cell membrane. Functionally, inhibitor of viral mouvements which confers resistance to some tobamoviruses including tomato mosaic virus (ToMV) (e.g. isolates L, W3 and SL-1) and tobacco mosaic virus (TMV), but not to resistance-breaking isolates (e.g. B7, LT1, LII, Ltbl, ToMV2, and ToMV1-2) ToMV and tomato brown rugose fruit virus (ToBRFV). Elicits a hypersensitive reaction in response to avirulent (Avr) movement proteins from resistance inducing tobamoviruses (e.g. ToMV and TMV) strains, thus leading to programmed cell death. The protein is ToMV resistance protein Tm-2(GCR236) of Solanum lycopersicum (Tomato).